The sequence spans 545 residues: Glucose-6-phosphate isomerase (545 aa).

Glu351 functions as the Proton donor in the catalytic mechanism. Residues His382 and Lys510 contribute to the active site.

It belongs to the GPI family.

It localises to the cytoplasm. It catalyses the reaction alpha-D-glucose 6-phosphate = beta-D-fructose 6-phosphate. It functions in the pathway carbohydrate biosynthesis; gluconeogenesis. Its pathway is carbohydrate degradation; glycolysis; D-glyceraldehyde 3-phosphate and glycerone phosphate from D-glucose: step 2/4. In terms of biological role, catalyzes the reversible isomerization of glucose-6-phosphate to fructose-6-phosphate. This is Glucose-6-phosphate isomerase from Shewanella oneidensis (strain ATCC 700550 / JCM 31522 / CIP 106686 / LMG 19005 / NCIMB 14063 / MR-1).